Here is a 701-residue protein sequence, read N- to C-terminus: Protein UL29/UL28 (701 aa).

Residues 1–33 (MSGRRKGCSAATASSSSSSPPSRLPPLPGHARR) form a disordered region.

The protein belongs to the herpesviridae US22 family. As to quaternary structure, interacts with UL38 and host HDAC1; these interactions are necessary for the HDAC1 interaction with UL38. Interacts with host MTA2.

It localises to the virion. It is found in the host nucleus. The protein localises to the host cytoplasm. Contributes to activation of immediate-early gene expression. The protein is Protein UL29/UL28 (UL29) of Homo sapiens (Human).